A 103-amino-acid polypeptide reads, in one-letter code: Large ribosomal subunit protein bL21 (103 aa).

The protein belongs to the bacterial ribosomal protein bL21 family. Part of the 50S ribosomal subunit. Contacts protein L20.

This protein binds to 23S rRNA in the presence of protein L20. This chain is Large ribosomal subunit protein bL21, found in Shewanella denitrificans (strain OS217 / ATCC BAA-1090 / DSM 15013).